The sequence spans 63 residues: Beta-glucosidase A-3 (63 aa).

Residue Asp-12 is part of the active site. 2 N-linked (GlcNAc...) asparagine glycosylation sites follow: Asn-48 and Asn-56.

It belongs to the glycosyl hydrolase 3 family.

The enzyme catalyses Hydrolysis of terminal, non-reducing beta-D-glucosyl residues with release of beta-D-glucose.. It functions in the pathway glycan metabolism; cellulose degradation. The protein is Beta-glucosidase A-3 of Aspergillus wentii.